Consider the following 1335-residue polypeptide: Phospholipid-transporting ATPase IK (1335 aa).

The Cytoplasmic portion of the chain corresponds to 1-74; it reads MDGVHLGENL…LYEQFHRMSN (74 aa). Residues 75 to 95 form a helical membrane-spanning segment; sequence LYFLFIIILQGIPEISTLPWF. Over 96-295 the chain is Exoplasmic loop; that stretch reads TLFAPLVCLF…LDLMMNKLVA (200 aa). The chain crosses the membrane as a helical span at residues 296 to 316; it reads LIFLSLVIASLLLTVGFTFMV. The Cytoplasmic segment spans residues 317-339; sequence KQFKAKHYYMSPTHGRSDAMESF. A helical membrane pass occupies residues 340 to 360; sequence FIFWGFLILLSVMVPMAMFII. Over 361-917 the chain is Exoplasmic loop; that stretch reads AEFIYLGNSI…YMRVCKFLRY (557 aa). Asp-407 serves as the catalytic 4-aspartylphosphate intermediate. Residues Asp-407, Lys-408, Thr-409, Glu-504, Phe-545, Lys-568, Arg-601, Thr-681, Gly-682, Asp-683, Arg-831, and Lys-837 each contribute to the ATP site. Asp-407 is a Mg(2+) binding site. Thr-409 is a binding site for Mg(2+). Asp-857 provides a ligand contact to Mg(2+). The ATP site is built by Asn-860 and Asp-861. Asp-861 contributes to the Mg(2+) binding site. A helical membrane pass occupies residues 918 to 938; that stretch reads FFYKTVASMMAQIWFSLVNGF. At 939–946 the chain is on the cytoplasmic side; it reads SAQPLYEG. A helical transmembrane segment spans residues 947–967; it reads WFLALFNLLYSTLPVLYIGLF. Over 968–995 the chain is Exoplasmic loop; it reads EQDVTAEKSLKMPELYMAGQKGELFNYS. A helical transmembrane segment spans residues 996-1016; that stretch reads IFMQAITHGTITSMINFFVTV. Over 1017–1033 the chain is Cytoplasmic; that stretch reads MVSSDMSKAGSSHDYQS. The helical transmembrane segment at 1034 to 1054 threads the bilayer; the sequence is LGVLVAISSLLSVTLEVMLVV. Residue Lys-1055 is a topological domain, exoplasmic loop. Residues 1056 to 1076 form a helical membrane-spanning segment; the sequence is YWTLLFVGAVVLSLSSYVLMT. The Cytoplasmic portion of the chain corresponds to 1077–1104; sequence SLTQSLWMYRISPKTFPFLFADYNVLFE. A helical membrane pass occupies residues 1105 to 1125; the sequence is PCSLLLIVLNVALNVLPMLAL. Over 1126-1335 the chain is Exoplasmic loop; that stretch reads RTIHRTVLKQ…SQLEVPRKQS (210 aa). Disordered regions lie at residues 1192 to 1215, 1236 to 1280, and 1314 to 1335; these read VDDS…PLQN, FGKG…GKLL, and SPLW…RKQS. Composition is skewed to polar residues over residues 1246–1255 and 1266–1276; these read PNTSSQTMEK and QKLPTTTSATS.

Belongs to the cation transport ATPase (P-type) (TC 3.A.3) family. Type IV subfamily. Requires Mg(2+) as cofactor. In terms of tissue distribution, expressed in testis, specifically in spermatids within seminiferous tubules (at protein level).

The protein localises to the cytoplasmic vesicle. It is found in the secretory vesicle. It localises to the acrosome membrane. The protein resides in the endoplasmic reticulum membrane. It catalyses the reaction ATP + H2O + phospholipidSide 1 = ADP + phosphate + phospholipidSide 2.. It carries out the reaction a 1,2-diacyl-sn-glycero-3-phospho-L-serine(out) + ATP + H2O = a 1,2-diacyl-sn-glycero-3-phospho-L-serine(in) + ADP + phosphate + H(+). In terms of biological role, P4-ATPase flippase which catalyzes the hydrolysis of ATP coupled to the transport of aminophospholipids from the outer to the inner leaflet of various membranes and ensures the maintenance of asymmetric distribution of phospholipids. Phospholipid translocation also seems to be implicated in vesicle formation and in uptake of lipid signaling molecules. May be responsible for the maintenance of asymmetric distribution of phosphatidylserine (PS) in spermatozoa membranes. Involved in acrosome reactions and binding of spermatozoa to zona pellucida. The chain is Phospholipid-transporting ATPase IK from Mus musculus (Mouse).